The following is a 261-amino-acid chain: Flagellar L-ring protein (261 aa).

The first 18 residues, Met-1–Gly-18, serve as a signal peptide directing secretion. Cys-19 is lipidated: N-palmitoyl cysteine. The S-diacylglycerol cysteine moiety is linked to residue Cys-19. Residues Thr-37 to Pro-67 are disordered.

This sequence belongs to the FlgH family. As to quaternary structure, the basal body constitutes a major portion of the flagellar organelle and consists of four rings (L,P,S, and M) mounted on a central rod.

The protein localises to the cell outer membrane. The protein resides in the bacterial flagellum basal body. In terms of biological role, assembles around the rod to form the L-ring and probably protects the motor/basal body from shearing forces during rotation. The polypeptide is Flagellar L-ring protein (Vibrio cholerae serotype O1 (strain ATCC 39541 / Classical Ogawa 395 / O395)).